The sequence spans 492 residues: Pentatricopeptide repeat-containing protein At4g21705, mitochondrial (492 aa).

A mitochondrion-targeting transit peptide spans 1–17 (MNILRRIPANLIASRYY). 8 PPR repeats span residues 125-159 (NDKT…GFVT), 160-194 (SSLT…NVAP), 195-225 (DNYS…MERR), 231-261 (DWNT…SENR), 266-296 (DGEG…EKDV), 301-335 (INQD…GNCY), 336-370 (DFRV…GKAT), and 371-405 (TPES…EVGS).

The protein belongs to the PPR family. P subfamily.

The protein localises to the mitochondrion. This is Pentatricopeptide repeat-containing protein At4g21705, mitochondrial from Arabidopsis thaliana (Mouse-ear cress).